Reading from the N-terminus, the 386-residue chain is Homoserine O-succinyltransferase (386 aa).

Residues 49-358 enclose the AB hydrolase-1 domain; the sequence is NAILICHALS…DAEQGHDSFL (310 aa). Ser156 (nucleophile) is an active-site residue. Arg226 contributes to the substrate binding site. Active-site residues include Asp321 and His354. Asp355 is a substrate binding site.

This sequence belongs to the AB hydrolase superfamily. MetX family. In terms of assembly, homodimer.

Its subcellular location is the cytoplasm. It carries out the reaction L-homoserine + succinyl-CoA = O-succinyl-L-homoserine + CoA. It participates in amino-acid biosynthesis; L-methionine biosynthesis via de novo pathway; O-succinyl-L-homoserine from L-homoserine: step 1/1. Transfers a succinyl group from succinyl-CoA to L-homoserine, forming succinyl-L-homoserine. This Acinetobacter baumannii (strain ACICU) protein is Homoserine O-succinyltransferase.